A 196-amino-acid chain; its full sequence is Peptide deformylase (196 aa).

2 residues coordinate Fe cation: Cys-105 and His-147. The active site involves Glu-148. Residue His-151 coordinates Fe cation.

The protein belongs to the polypeptide deformylase family. Fe(2+) is required as a cofactor.

The catalysed reaction is N-terminal N-formyl-L-methionyl-[peptide] + H2O = N-terminal L-methionyl-[peptide] + formate. In terms of biological role, removes the formyl group from the N-terminal Met of newly synthesized proteins. Requires at least a dipeptide for an efficient rate of reaction. N-terminal L-methionine is a prerequisite for activity but the enzyme has broad specificity at other positions. In Christiangramia forsetii (strain DSM 17595 / CGMCC 1.15422 / KT0803) (Gramella forsetii), this protein is Peptide deformylase.